A 326-amino-acid polypeptide reads, in one-letter code: Nucleotide sugar transporter SLC35D2 (326 aa).

Residues 1–15 (MEEPNAAPLPSRLAR) lie on the Extracellular side of the membrane. The helical transmembrane segment at 16 to 36 (LLSALFYGTCSFLIVLVNKAL) threads the bilayer. The Cytoplasmic portion of the chain corresponds to 37–41 (LTTYG). A helical membrane pass occupies residues 42-62 (FPSPIVLGIGQMATTIMILYV). The Extracellular portion of the chain corresponds to 63-130 (FKLNKIIHFP…LLEAIILGTQ (68 aa)). Residues 131-151 (YSLNIILSVLAIVLGAFIAAG) form a helical membrane-spanning segment. Residues 152–155 (SDLT) lie on the Cytoplasmic side of the membrane. A helical transmembrane segment spans residues 156–176 (FNLEGYVFVFLNDIFTAANGV). The Extracellular portion of the chain corresponds to 177–189 (YTKQKMDPKELGK). A helical membrane pass occupies residues 190–210 (YGVLFYNACFMLIPTVIISVS). The Cytoplasmic segment spans residues 211 to 225 (TGDFQQATEFRHWKN). The chain crosses the membrane as a helical span at residues 226–246 (VLFIIQFLLSCLLGFLLMYST). Topologically, residues 247-253 (ALCSYYN) are extracellular. The helical transmembrane segment at 254 to 276 (SALTTAVVGAIKNVSVAYIGMLV) threads the bilayer. The Cytoplasmic portion of the chain corresponds to 277 to 280 (GGDY). A helical transmembrane segment spans residues 281–303 (IFSLLNFIGLNICMAGGLRYSFL). The Extracellular portion of the chain corresponds to 304 to 326 (TLSSQLKPKQPVDEESIPLDLKS).

The protein belongs to the TPT transporter family. SLC35D subfamily.

The protein localises to the golgi apparatus membrane. It catalyses the reaction UMP(out) + UDP-N-acetyl-alpha-D-glucosamine(in) = UMP(in) + UDP-N-acetyl-alpha-D-glucosamine(out). The catalysed reaction is UMP(out) + UDP-alpha-D-glucose(in) = UMP(in) + UDP-alpha-D-glucose(out). In terms of biological role, nucleotide sugar antiporter transporting UDP-N-acetylglucosamine (UDP-GlcNAc) and UDP-glucose (UDP-Glc) from the cytosol into the lumen of the Golgi in exchange of UMP. By supplying UDP-N-acetylglucosamine, a donor substrate to heparan sulfate synthases, probably takes part in the synthesis of these glycoconjugates. The sequence is that of Nucleotide sugar transporter SLC35D2 from Mus musculus (Mouse).